A 528-amino-acid polypeptide reads, in one-letter code: Glutamate--cysteine ligase (528 aa).

Belongs to the glutamate--cysteine ligase type 1 family. Type 1 subfamily.

The catalysed reaction is L-cysteine + L-glutamate + ATP = gamma-L-glutamyl-L-cysteine + ADP + phosphate + H(+). The protein operates within sulfur metabolism; glutathione biosynthesis; glutathione from L-cysteine and L-glutamate: step 1/2. This Janthinobacterium sp. (strain Marseille) (Minibacterium massiliensis) protein is Glutamate--cysteine ligase.